A 213-amino-acid polypeptide reads, in one-letter code: Thymidylate kinase (213 aa).

9 to 16 (GLEGAGKS) serves as a coordination point for ATP.

The protein belongs to the thymidylate kinase family.

The enzyme catalyses dTMP + ATP = dTDP + ADP. Its function is as follows. Phosphorylation of dTMP to form dTDP in both de novo and salvage pathways of dTTP synthesis. The polypeptide is Thymidylate kinase (Aeromonas hydrophila subsp. hydrophila (strain ATCC 7966 / DSM 30187 / BCRC 13018 / CCUG 14551 / JCM 1027 / KCTC 2358 / NCIMB 9240 / NCTC 8049)).